The primary structure comprises 179 residues: Translation initiation factor IF-3 (179 aa).

The protein belongs to the IF-3 family. As to quaternary structure, monomer.

The protein resides in the cytoplasm. Functionally, IF-3 binds to the 30S ribosomal subunit and shifts the equilibrium between 70S ribosomes and their 50S and 30S subunits in favor of the free subunits, thus enhancing the availability of 30S subunits on which protein synthesis initiation begins. This chain is Translation initiation factor IF-3, found in Proteus hauseri.